Reading from the N-terminus, the 412-residue chain is 1-deoxy-D-xylulose 5-phosphate reductoisomerase (412 aa).

Thr-5, Gly-6, Ser-7, Ile-8, Gly-31, Asn-33, and Asn-125 together coordinate NADPH. A 1-deoxy-D-xylulose 5-phosphate-binding site is contributed by Lys-126. Glu-127 contacts NADPH. Asp-151 contacts Mn(2+). Positions 152, 153, 189, and 212 each coordinate 1-deoxy-D-xylulose 5-phosphate. Glu-153 contributes to the Mn(2+) binding site. Gly-218 provides a ligand contact to NADPH. Ser-225, Asn-230, Lys-231, and Glu-234 together coordinate 1-deoxy-D-xylulose 5-phosphate. Position 234 (Glu-234) interacts with Mn(2+).

The protein belongs to the DXR family. Mg(2+) is required as a cofactor. Mn(2+) serves as cofactor.

The enzyme catalyses 2-C-methyl-D-erythritol 4-phosphate + NADP(+) = 1-deoxy-D-xylulose 5-phosphate + NADPH + H(+). The protein operates within isoprenoid biosynthesis; isopentenyl diphosphate biosynthesis via DXP pathway; isopentenyl diphosphate from 1-deoxy-D-xylulose 5-phosphate: step 1/6. Its function is as follows. Catalyzes the NADPH-dependent rearrangement and reduction of 1-deoxy-D-xylulose-5-phosphate (DXP) to 2-C-methyl-D-erythritol 4-phosphate (MEP). In Prochlorococcus marinus (strain MIT 9313), this protein is 1-deoxy-D-xylulose 5-phosphate reductoisomerase.